A 206-amino-acid polypeptide reads, in one-letter code: Small ribosomal subunit protein uS4 (206 aa).

The 61-residue stretch at 96 to 156 (GRLDNVVYRM…EKAKKQARIK (61 aa)) folds into the S4 RNA-binding domain.

This sequence belongs to the universal ribosomal protein uS4 family. As to quaternary structure, part of the 30S ribosomal subunit. Contacts protein S5. The interaction surface between S4 and S5 is involved in control of translational fidelity.

One of the primary rRNA binding proteins, it binds directly to 16S rRNA where it nucleates assembly of the body of the 30S subunit. In terms of biological role, with S5 and S12 plays an important role in translational accuracy. The protein is Small ribosomal subunit protein uS4 of Aeromonas salmonicida (strain A449).